The chain runs to 593 residues: Aspartate--tRNA ligase (593 aa).

E180 provides a ligand contact to L-aspartate. Residues 204–207 (QIFK) form an aspartate region. R226 is a binding site for L-aspartate. ATP-binding positions include 226 to 228 (RDE) and Q235. H453 lines the L-aspartate pocket. Residue E487 coordinates ATP. R494 contributes to the L-aspartate binding site. 539–542 (GLDR) contacts ATP.

The protein belongs to the class-II aminoacyl-tRNA synthetase family. Type 1 subfamily. As to quaternary structure, homodimer.

The protein localises to the cytoplasm. It carries out the reaction tRNA(Asp) + L-aspartate + ATP = L-aspartyl-tRNA(Asp) + AMP + diphosphate. Functionally, catalyzes the attachment of L-aspartate to tRNA(Asp) in a two-step reaction: L-aspartate is first activated by ATP to form Asp-AMP and then transferred to the acceptor end of tRNA(Asp). The sequence is that of Aspartate--tRNA ligase from Clostridium botulinum (strain Kyoto / Type A2).